The chain runs to 342 residues: Isopentenyl-diphosphate delta-isomerase (342 aa).

Position 11-12 (R11–K12) interacts with substrate. FMN is bound by residues S68, S69–T71, S99, and N128. Residue S99 to R101 coordinates substrate. Q162 provides a ligand contact to substrate. Residue E163 participates in Mg(2+) binding. Residues K194, S219, T224, G275 to R277, and A296 to K297 contribute to the FMN site.

The protein belongs to the IPP isomerase type 2 family. As to quaternary structure, homooctamer. Dimer of tetramers. It depends on FMN as a cofactor. NADPH serves as cofactor. Requires Mg(2+) as cofactor.

It localises to the cytoplasm. The enzyme catalyses isopentenyl diphosphate = dimethylallyl diphosphate. Involved in the biosynthesis of isoprenoids. Catalyzes the 1,3-allylic rearrangement of the homoallylic substrate isopentenyl (IPP) to its allylic isomer, dimethylallyl diphosphate (DMAPP). This chain is Isopentenyl-diphosphate delta-isomerase, found in Legionella pneumophila (strain Paris).